We begin with the raw amino-acid sequence, 284 residues long: UDP-N-acetylenolpyruvoylglucosamine reductase (284 aa).

The 160-residue stretch at 21-180 folds into the FAD-binding PCMH-type domain; the sequence is KIGGPARLFV…LKAAFKLKKA (160 aa). Residue Arg159 is part of the active site. The Proton donor role is filled by Ser209. Residue Glu280 is part of the active site.

The protein belongs to the MurB family. It depends on FAD as a cofactor.

It localises to the cytoplasm. The enzyme catalyses UDP-N-acetyl-alpha-D-muramate + NADP(+) = UDP-N-acetyl-3-O-(1-carboxyvinyl)-alpha-D-glucosamine + NADPH + H(+). The protein operates within cell wall biogenesis; peptidoglycan biosynthesis. In terms of biological role, cell wall formation. The sequence is that of UDP-N-acetylenolpyruvoylglucosamine reductase from Pseudothermotoga lettingae (strain ATCC BAA-301 / DSM 14385 / NBRC 107922 / TMO) (Thermotoga lettingae).